Reading from the N-terminus, the 320-residue chain is Olfactory receptor 2AT4 (320 aa).

The Extracellular segment spans residues 1-31 (MDATACNESVDGSPVFYLLGIPSLPETFFLP). Residue N7 is glycosylated (N-linked (GlcNAc...) asparagine). A helical transmembrane segment spans residues 32–52 (VFFIFLLFYLLILMGNALILV). The Cytoplasmic portion of the chain corresponds to 53-62 (AVVAEPSLHK). The chain crosses the membrane as a helical span at residues 63–83 (PMYFFLINLSTLDILFTTTTV). Over 84-102 (PKMLSLFLLGDRFLSFSSC) the chain is Extracellular. C102 and C184 are disulfide-bonded. The helical transmembrane segment at 103–123 (LLQMYLFQSFTCSEAFILVVM) threads the bilayer. At 124–145 (AYDRYVAICHPLHYPVLMNPQT) the chain is on the cytoplasmic side. The helical transmembrane segment at 146-166 (NATLAASAWLTALLLPIPAVV) threads the bilayer. Residues 167–200 (RTSQMAYNSIAYIYHCFCDHLAVVQASCSDTTPQ) are Extracellular-facing. A helical membrane pass occupies residues 201–221 (TLMGFCIAMVVSFLPLLLVLL). At 222–245 (SYVHILASVLRISSLEGRAKAFST) the chain is on the cytoplasmic side. A helical transmembrane segment spans residues 246-266 (CSSHLLVVGTYYSSIAIAYVA). Residues 267-276 (YRADLPLDFH) lie on the Extracellular side of the membrane. A helical membrane pass occupies residues 277 to 297 (IMGNVVYAILTPILNPLIYTL). Residues 298–320 (RNRDVKAAITKIMSQDPGCDRSI) lie on the Cytoplasmic side of the membrane.

It belongs to the G-protein coupled receptor 1 family. Detected in the keratinocytes of the epidermis (at protein level). Detected in hair follicles in proximal outer root sheath and hair matrix keratinocytes (at protein level).

It localises to the cell membrane. Functionally, olfactory receptor. Activated by the synthetic sandalwood odorant sandalore. Endogenous ligand is unknown. The activity of this receptor is probably mediated by G proteins which induce elevation of intracellular Ca(2+), a cAMP-dependent pathway and phosphorylation of MAPK1/ERK2, MAPK3/ERK1 and p38 MAPKs. Activation of OR2AT4 induces proliferation, migration, and re-epithelialization during wound-healing processes of keratinocytes. Stimulation of OR2AT4 by sandalore promotes hair growth by decreasing apoptosis and increasing production of the anagen-prolonging growth factor IGF1 as well as other pathways involving various kinases. This is Olfactory receptor 2AT4 from Homo sapiens (Human).